We begin with the raw amino-acid sequence, 208 residues long: Uracil phosphoribosyltransferase (208 aa).

Residues Arg78, Arg103, and 130-138 each bind 5-phospho-alpha-D-ribose 1-diphosphate; that span reads DPMLATGGS. Residues Ile193 and 198 to 200 contribute to the uracil site; that span reads GDA. 5-phospho-alpha-D-ribose 1-diphosphate is bound at residue Asp199.

It belongs to the UPRTase family. Mg(2+) is required as a cofactor.

It catalyses the reaction UMP + diphosphate = 5-phospho-alpha-D-ribose 1-diphosphate + uracil. Its pathway is pyrimidine metabolism; UMP biosynthesis via salvage pathway; UMP from uracil: step 1/1. Allosterically activated by GTP. Functionally, catalyzes the conversion of uracil and 5-phospho-alpha-D-ribose 1-diphosphate (PRPP) to UMP and diphosphate. This Thermus thermophilus (strain ATCC 27634 / DSM 579 / HB8) protein is Uracil phosphoribosyltransferase.